The primary structure comprises 248 residues: Fasciclin-like arabinogalactan protein 19 (248 aa).

A signal peptide spans 1 to 29; that stretch reads MAKISSASCFRAIFLGALIILCLPHPSTG. Residues 35 to 166 form the FAS1 domain; that stretch reads LERAIAILRV…IAVHGLADLL (132 aa). N-linked (GlcNAc...) asparagine glycans are attached at residues N114 and N136. Over residues 213–226 the composition is skewed to low complexity; sequence SPSVEEVSPSPSWG. The disordered stretch occupies residues 213-248; the sequence is SPSVEEVSPSPSWGEGEEDFIVGDEGGPLDGRNNGF.

It belongs to the fasciclin-like AGP family.

It localises to the secreted. In terms of biological role, may be a cell surface adhesion protein. In Arabidopsis thaliana (Mouse-ear cress), this protein is Fasciclin-like arabinogalactan protein 19 (FLA19).